The following is a 321-amino-acid chain: Gap junction delta-2 protein (321 aa).

Residues 1–19 (MGEWTILERLLEAAVQQHS) are Cytoplasmic-facing. A helical membrane pass occupies residues 20–42 (TMIGRILLTVVVIFRILIVAIVG). At 43–75 (ETVYDDEQTMFVCNTLQPGCNQACYDRAFPISH) the chain is on the extracellular side. Residues 76–98 (IRYWVFQIIMVCTPSLCFITYSV) form a helical membrane-spanning segment. Over 99–197 (HQSAKQRERR…KLRRQEGISR (99 aa)) the chain is Cytoplasmic. Residues 120-141 (PAESIGGPGGTGGGGSGGSKRE) form a disordered region. Gly residues predominate over residues 125–137 (GGPGGTGGGGSGG). The helical transmembrane segment at 198–220 (FYIIQVVFRNALEIGFLVGQYFL) threads the bilayer. Residues 221 to 252 (YGFSVPGLYECNRYPCIKEVECYVSRPTEKTV) lie on the Extracellular side of the membrane. A helical transmembrane segment spans residues 253-275 (FLVFMFAVSGICVVLNLAELNHL). The Cytoplasmic segment spans residues 276–321 (GWRKIKLAVRGAQAKRKSVYEIRNKDLPRVSVPNFGRTQSSDSAYV).

It belongs to the connexin family. Delta-type subfamily. As to quaternary structure, a connexon is composed of a hexamer of connexins. As to expression, highly expressed in neurons.

It is found in the cell membrane. The protein resides in the cell junction. It localises to the gap junction. Its function is as follows. One gap junction consists of a cluster of closely packed pairs of transmembrane channels, the connexons, through which materials of low MW diffuse from one cell to a neighboring cell. The polypeptide is Gap junction delta-2 protein (Gjd2) (Rattus norvegicus (Rat)).